The chain runs to 943 residues: MSKKRLYEIAKEVGVESKVIVAKAQELGLSVKSHSSSVEEADANRITSSLKPGTAKDESKPAPKATPTPKEEKVEPKVDKASVAKSAPAKETSKAEVKEASVALKKPKSRNFKAEREARAKAEAERRKNGGGRDNRNRNQQGNDQGKRHNNDRRNQKGNGQGDHNKGNRDNSTNHDRNFQGKLRNDQNQNNRRDNARNNQAGPRIDLKARAAALKAEQNAEYSRQSETRFREEKAAEQRRAKEQEKARKEKQQVKVAVQKAAAETKPAPKPAPVAPQSAPTAQVQDTRRKKVRPNKSRDNRRVNEDGPKQTRNNKWNNQNQVRNQRNSNWNKNKNKKGKNNRGNSAPKPVTERKFHELPKEFEYTEGMTVAEIAKRIKREPAEIVKKLFMMGVMATQNQSLDGDTIELLMVDYGIEATKKEEVDNADIERFFVDEDYLNKDAMVERAPVVTIMGHVDHGKTTLLDTLRNSRVATGEAGGITQHIGAYQIEEGGKKITFLDTPGHAAFTSMRARGASVTDITVLIVAADDGVMPQTIEAINHSKAAGVPIIVAINKIDKPDANPERVIGELAEHGVISTAWGGDSEFVEISAKFGQNIEELLETILLVAEVEELKADPTVRAIGTVIEARLDKGKGAVATLLVQQGTLNVQDPIVVGNTFGRVRAMTNDLGRRIKTAGPSAPVSITGLNEAPMAGDHFAVYEDEKAARAAGEERAKRALMKQRQQTHRVSLDNLFDTLKAGEMKTVNVIIKADVQGSVEALAASLLKIDVEGVRVNVVHSAVGAINESDITLAEASDAVVIGFNVRPTPQARQQAETDEVEIRLHSIIYKVIEEIEDAMKGMLDPEFEEKIIGEAVIRETFKVSKVGTIGGFMVTNGKITRDSSARVIRDGVVIFDGKLASLKHYKDDVKEVGNAQEGGLTIENYNDIKVDDVIEAYIMEEIKR.

Positions 30-357 (SVKSHSSSVE…KPVTERKFHE (328 aa)) are disordered. Composition is skewed to basic and acidic residues over residues 69 to 82 (PKEE…DKAS), 112 to 137 (FKAE…DNRN), 145 to 155 (QGKRHNNDRRN), 163 to 196 (DHNK…RDNA), and 224 to 253 (RQSE…EKQQ). The segment covering 254-266 (VKVAVQKAAAETK) has biased composition (low complexity). Positions 296 to 309 (KSRDNRRVNEDGPK) are enriched in basic and acidic residues. Positions 313–332 (NNKWNNQNQVRNQRNSNWNK) are enriched in low complexity. One can recognise a tr-type G domain in the interval 445–614 (ERAPVVTIMG…LLVAEVEELK (170 aa)). The interval 454-461 (GHVDHGKT) is G1. 454 to 461 (GHVDHGKT) provides a ligand contact to GTP. A G2 region spans residues 479–483 (GITQH). Residues 500–503 (DTPG) are G3. GTP is bound by residues 500 to 504 (DTPGH) and 554 to 557 (NKID). A G4 region spans residues 554 to 557 (NKID). The interval 590–592 (SAK) is G5.

This sequence belongs to the TRAFAC class translation factor GTPase superfamily. Classic translation factor GTPase family. IF-2 subfamily.

It localises to the cytoplasm. In terms of biological role, one of the essential components for the initiation of protein synthesis. Protects formylmethionyl-tRNA from spontaneous hydrolysis and promotes its binding to the 30S ribosomal subunits. Also involved in the hydrolysis of GTP during the formation of the 70S ribosomal complex. The chain is Translation initiation factor IF-2 from Streptococcus thermophilus (strain ATCC BAA-250 / LMG 18311).